The following is a 458-amino-acid chain: Protein unc-93 homolog A (458 aa).

A run of 5 helical transmembrane segments spans residues 8 to 28 (VLVV…LQNL), 42 to 62 (TLST…PILI), 69 to 89 (WTIV…FHAN), 90 to 110 (WYTL…LWSA), and 140 to 160 (IFFL…SLVF). An N-linked (GlcNAc...) asparagine glycan is attached at N190. 7 helical membrane passes run 202-222 (TLLG…AVFL), 258-275 (LCLL…QEFL), 286-306 (CALG…MTAL), 321-341 (AALY…FLLW), 345-365 (TNQL…DAVW), 390-410 (LGEA…CVST), and 412-432 (LYIL…VEYL).

The protein belongs to the unc-93 family.

Its subcellular location is the cell membrane. The chain is Protein unc-93 homolog A (Unc93a) from Mus musculus (Mouse).